Reading from the N-terminus, the 448-residue chain is tRNA(Ile)-lysidine synthase (448 aa).

Position 29-34 (Ser-29–Ser-34) interacts with ATP.

Belongs to the tRNA(Ile)-lysidine synthase family.

The protein localises to the cytoplasm. The enzyme catalyses cytidine(34) in tRNA(Ile2) + L-lysine + ATP = lysidine(34) in tRNA(Ile2) + AMP + diphosphate + H(+). Its function is as follows. Ligates lysine onto the cytidine present at position 34 of the AUA codon-specific tRNA(Ile) that contains the anticodon CAU, in an ATP-dependent manner. Cytidine is converted to lysidine, thus changing the amino acid specificity of the tRNA from methionine to isoleucine. The chain is tRNA(Ile)-lysidine synthase from Azoarcus sp. (strain BH72).